The following is a 435-amino-acid chain: F-box/FBD/LRR-repeat protein At5g44980 (435 aa).

In terms of domain architecture, F-box spans 3 to 49 (RDYISELPDSLLTQILLELRTKDSVKTSVLSKRWRNLWLNVPGLELF). 6 LRR repeats span residues 88-114 (CKGYRDRLMELIGTLVDHGLQHLYVFM), 138-162 (LHNVELKNSDFVVSLPCLKILKLEN), 165-190 (HGEDGPLVVEKLISGCSVLEDLELIR), 191-217 (PFDIRTHKVLLLLRVSSQTLKSFTLHF), 250-275 (VKNLSSLFSIDIGTKFNPLRHEDLRM), and 324-349 (MWSSSTHLLEAFLESCPNLKNLILEY). The FBD domain maps to 355 to 405 (REQVDFTNVPQCLISTLEYVEIKEPNEKSTIKLVNYFLENSAVLKKLTLRF).

The protein is F-box/FBD/LRR-repeat protein At5g44980 of Arabidopsis thaliana (Mouse-ear cress).